A 126-amino-acid polypeptide reads, in one-letter code: Fluoride-specific ion channel FluC 1 (126 aa).

4 helical membrane-spanning segments follow: residues 5–25 (FILAVAAGGSLGSVARYLVGI), 39–59 (TLFINITGSLLIGLFAGLFAI), 69–89 (IFLIVGICGGYTTFSTFSLDS), and 100–120 (AAGAYMIASVVLSVGALIAGI). Residues Gly77 and Thr80 each contribute to the Na(+) site.

This sequence belongs to the fluoride channel Fluc/FEX (TC 1.A.43) family.

The protein localises to the cell inner membrane. It carries out the reaction fluoride(in) = fluoride(out). Na(+) is not transported, but it plays an essential structural role and its presence is essential for fluoride channel function. In terms of biological role, fluoride-specific ion channel. Important for reducing fluoride concentration in the cell, thus reducing its toxicity. The sequence is that of Fluoride-specific ion channel FluC 1 from Nitrobacter hamburgensis (strain DSM 10229 / NCIMB 13809 / X14).